We begin with the raw amino-acid sequence, 191 residues long: MSRDTTTPDDAAAFEAAATTSGTATSAGENIPGDLLPLCREHICPVCPEKAQADEQRLRALADLENTKKRLQREKDEQVRYAAETVLADLLPTLDNLDLALQYGQGSAECRNMLVGVEMTRKLLLEALGRHGLEAVGEAGEPFTPELHEAMSHEDRGDMPADHVATVMMKGYRLKERLLRPAKVTVSRTPG.

The protein belongs to the GrpE family. In terms of assembly, homodimer.

Its subcellular location is the cytoplasm. In terms of biological role, participates actively in the response to hyperosmotic and heat shock by preventing the aggregation of stress-denatured proteins, in association with DnaK and GrpE. It is the nucleotide exchange factor for DnaK and may function as a thermosensor. Unfolded proteins bind initially to DnaJ; upon interaction with the DnaJ-bound protein, DnaK hydrolyzes its bound ATP, resulting in the formation of a stable complex. GrpE releases ADP from DnaK; ATP binding to DnaK triggers the release of the substrate protein, thus completing the reaction cycle. Several rounds of ATP-dependent interactions between DnaJ, DnaK and GrpE are required for fully efficient folding. This is Protein GrpE from Nitratidesulfovibrio vulgaris (strain ATCC 29579 / DSM 644 / CCUG 34227 / NCIMB 8303 / VKM B-1760 / Hildenborough) (Desulfovibrio vulgaris).